We begin with the raw amino-acid sequence, 449 residues long: Malonyl-CoA:anthocyanidin 5-O-glucoside-6''-O-malonyltransferase (449 aa).

Position 1 is an N-acetylmethionine (Met-1). Active-site proton acceptor residues include His-162 and Asp-394.

The protein belongs to the plant acyltransferase family. As to expression, expressed in flowers. Detected in leaves, stems, roots and siliques.

The enzyme catalyses anthocyanin A3 + malonyl-CoA = anthocyanin A5 + CoA. The catalysed reaction is anthocyanin A7 + malonyl-CoA = anthocyanin A9 + CoA. It catalyses the reaction anthocyanin A6 + malonyl-CoA = anthocyanin A8 + CoA. It carries out the reaction anthocyanin A10 + malonyl-CoA = anthocyanin A11 + CoA. Functionally, catalyzes the malonylation of the 5-O-glucose residue of anthocyanins, using malonyl-CoA as the malonyl donor. Acts only on anthocyanin substrates containing a 5-O-glucosyl moiety. Acts on the four native A.thaliana anthocyanins, A3, A7, and to a lesser extent, A6 and A10. Can also use the non-native anthocyanin compounds cyanin (cyanidin 3,5-diglucoside), malvin, pelargonidin 3,5-diglucoside, peonidin 3,5-diglucoside, cyanidin 3-coumaroylglucoside 5-glucoside, delphinidin 3-coumaroylrutinoside 5-glucoside and petunidin 3-coumaroylrutinoside 5-glucoside as substrates. Is the sole enzyme responsible for producing malonylated anthocyanin 5-O-glucosides in A.thaliana. Is not able to catalyze acyl transfer using acetyl-CoA, butyryl-CoA, hexanoyl-CoA, benzoyl-CoA, cinnamoyl-CoA, methylmalonyl-CoA, succinyl-CoA, p-coumaroyl-CoA or caffeoyl-CoA. The polypeptide is Malonyl-CoA:anthocyanidin 5-O-glucoside-6''-O-malonyltransferase (5MAT) (Arabidopsis thaliana (Mouse-ear cress)).